We begin with the raw amino-acid sequence, 239 residues long: Endolytic peptidoglycan transglycosylase RlpA (239 aa).

The signal sequence occupies residues 1 to 25 (MTLTRKTLFLLTAAFGIHSFQTASA). Positions 160 to 239 (VAENKDIFID…GMVRAVLTAG (80 aa)) constitute an SPOR domain.

Belongs to the RlpA family.

In terms of biological role, lytic transglycosylase with a strong preference for naked glycan strands that lack stem peptides. The polypeptide is Endolytic peptidoglycan transglycosylase RlpA (Neisseria meningitidis serogroup A / serotype 4A (strain DSM 15465 / Z2491)).